Here is a 1201-residue protein sequence, read N- to C-terminus: MARAKLKNSPSESNSHVKTVPPATTEDVRGVSPLLPARRMGSLGSDVGQRPHAEDFSMDSSFSQVQVEFYVNENTFKERLKLFFIKNQRSSLRIRLFNFSLKLLTCLLYIVRVLLDNPEEGIGCWECEKQNYTLFNQSTKINWSHIFWVDRKLPLWAVQVSIALISFLETMLLIYLSYKGNIWEQIFRISFILEMINTVPFIITIFWPPLRNLFIPVFLNCWLAKYALENMINDLHRAIQRTQSAMFNQVLILICTLLCLVFTGTCGIQHLERAGEKLSLFKSFYFCIVTFSTVGYGDVTPKIWPSQLLVVIMICVALVVLPLQFEELVYLWMERQKSGGNYSRHRAQTEKHVVLCVSSLKIDLLMDFLNEFYAHPRLQDYYVVILCPTEMDIQVRRVLQIPLWSQRVIYLQGSALKDQDLMRAKMDNGEACFILSSRNEVDRTAADHQTILRAWAVKDFAPNCPLYVQILKPENKFHVKFADHVVCEEECKYAMLALNCVCPATSTLITLLVHTSRGQEGQESPEQWQRMYGRCSGNEVYHIRMGDSKFFMEYEGKSFTYAAFHAHKKYGVCLIGIRREENKSILLNPGPRHIMAASDTCFYINITKEENSAFIFKQAEKQKKKGFAGRGTYDGPSRLPVHSIIASMGTVAMDLQNTECRPTNSSKLALPAENGSGNRRPSIAPVLELADTSSLLPCDLLSDQSEDEMTQSDEEGSAVVEYVKGYPPNSPYIGSSPTLCHLLPEKAPFCCLRLDKGCKHNSFEDAKAYGFKNKLIIVSAETAGNGLYNFIVPLRAYYRSRKELNPIVLLLDNKPEHHFLEAICCFPMVYYMEGTIDNLDSLLQCGIIYADNLVVVDKESTMSAEEDYMADAKTIVNVQTMFRLFPSLSIITELTHPSNMRFMQFRAKDSYSLALSKLEKKERENGSNLAFMFRLPFAAGRVFSISMLDTLLYQSFVKDYMITITRLLLGLDTTPGSGYLCAMKITEDDLWIRTYGRLFQKLCSSSAEIPIGIYRTESHMFATSEPHDIRAQSQISINVEDCEDTKDVKEHWGIKTGHHRNSCSSDQSEHPLLRRKSMQWARRLSRKGNKHSGKTAEWISQQRLSLYRRSERQELSELVKNRMKHLGLPTTGYDEMNDHQNTLSYVLINPPPDTRLELNDIVYLIRSDPLAHVANDGHSRKSSCSNKLGPCNPETRDETQL.

A disordered region spans residues 1–28; the sequence is MARAKLKNSPSESNSHVKTVPPATTEDV. Residues 1–92 lie on the Cytoplasmic side of the membrane; sequence MARAKLKNSP…FFIKNQRSSL (92 aa). Residues 8–17 are compositionally biased toward polar residues; the sequence is NSPSESNSHV. A helical membrane pass occupies residues 93–115; sequence RIRLFNFSLKLLTCLLYIVRVLL. Over 116 to 152 the chain is Extracellular; the sequence is DNPEEGIGCWECEKQNYTLFNQSTKINWSHIFWVDRK. N-linked (GlcNAc...) asparagine glycans are attached at residues Asn131 and Asn136. Residues 153–175 traverse the membrane as a helical segment; the sequence is LPLWAVQVSIALISFLETMLLIY. Over 176–184 the chain is Cytoplasmic; sequence LSYKGNIWE. Residues 185–206 form a helical membrane-spanning segment; sequence QIFRISFILEMINTVPFIITIF. Residues 207 to 216 lie on the Extracellular side of the membrane; the sequence is WPPLRNLFIP. The chain crosses the membrane as a helical span at residues 217–229; the sequence is VFLNCWLAKYALE. Over 230–249 the chain is Cytoplasmic; it reads NMINDLHRAIQRTQSAMFNQ. The helical transmembrane segment at 250–272 threads the bilayer; that stretch reads VLILICTLLCLVFTGTCGIQHLE. Residues 273-279 lie on the Extracellular side of the membrane; that stretch reads RAGEKLS. The pore-forming intramembrane region spans 280–300; sequence LFKSFYFCIVTFSTVGYGDVT. The K(+) site is built by Val294 and Gly295. Topologically, residues 301-304 are extracellular; it reads PKIW. A helical transmembrane segment spans residues 305–326; sequence PSQLLVVIMICVALVVLPLQFE. At 327-1201 the chain is on the cytoplasmic side; the sequence is ELVYLWMERQ…NPETRDETQL (875 aa). The 137-residue stretch at 350–486 folds into the RCK N-terminal 1 domain; the sequence is EKHVVLCVSS…FHVKFADHVV (137 aa). Na(+) contacts are provided by Leu511, His514, Ser536, and Asn538. Zn(2+)-binding residues include Cys750 and Cys751. The K(+) site is built by Arg753 and Lys756. Na(+)-binding residues include Arg753 and Lys756. Zn(2+)-binding residues include Cys758 and His760. Asn761, Tyr769, and Gly770 together coordinate K(+). Phe771 is a Na(+) binding site. The region spanning 773-913 is the RCK N-terminal 2 domain; sequence NKLIIVSAET…QFRAKDSYSL (141 aa). 5 residues coordinate K(+): Ser779, Leu810, Asp812, Gly834, and Asp857. The tract at residues 1175-1201 is disordered; that stretch reads NDGHSRKSSCSNKLGPCNPETRDETQL.

Belongs to the potassium channel family. Calcium-activated (TC 1.A.1.3) subfamily. KCa4.1/KCNT1 sub-subfamily. In terms of assembly, homotetramer; which constitutes the Na(+)-activated K(+) channel. Interacts with KCNT2; these heterodimer channels differ from the homomers in their unitary conductance, kinetic behavior, subcellular localization, and response to activation of protein kinase C. Post-translationally, phosphorylated by protein kinase C. Phosphorylation of the C-terminal domain increases channel activity.

Its subcellular location is the cell membrane. The enzyme catalyses K(+)(in) = K(+)(out). Its activity is regulated as follows. Activated by high intracellular Na(+). In addition to activation by Na(+), is cooperatively activated by intracellular Cl(-) levels. Inhibited by Zn(2+). Activated upon stimulation of G-protein coupled receptors, such as CHRM1 and GRIA1. In terms of biological role, sodium-activated K(+) channel. Acts as an important mediator of neuronal membrane excitability. Contributes to the delayed outward currents. Regulates of neuronal bursting in sensory neurons. Contributes to synaptic development and plasticity. The polypeptide is Potassium channel subfamily T member 1 (KCNT1) (Gallus gallus (Chicken)).